The following is a 336-amino-acid chain: tRNA (guanine(37)-N(1))-methyltransferase Trm5b (336 aa).

S-adenosyl-L-methionine contacts are provided by residues arginine 186, 223-224, 251-252, and asparagine 265; these read DI and DV.

Belongs to the class I-like SAM-binding methyltransferase superfamily. TRM5/TYW2 family. As to quaternary structure, monomer.

The protein resides in the cytoplasm. It carries out the reaction guanosine(37) in tRNA + S-adenosyl-L-methionine = N(1)-methylguanosine(37) in tRNA + S-adenosyl-L-homocysteine + H(+). In terms of biological role, specifically methylates the N1 position of guanosine-37 in various tRNAs. The chain is tRNA (guanine(37)-N(1))-methyltransferase Trm5b (trm5b) from Methanocaldococcus jannaschii (strain ATCC 43067 / DSM 2661 / JAL-1 / JCM 10045 / NBRC 100440) (Methanococcus jannaschii).